The following is a 265-amino-acid chain: Polyphosphate glucokinase (265 aa).

Over residues 1–18 (MTSTGPETSETPGATTQR) the composition is skewed to polar residues. The interval 1–22 (MTSTGPETSETPGATTQRHGFG) is disordered. ATP is bound at residue 24–29 (DVGGSG).

This sequence belongs to the ROK (NagC/XylR) family. In terms of assembly, homodimer.

The enzyme catalyses [phosphate](n) + D-glucose = [phosphate](n-1) + D-glucose 6-phosphate + H(+). It catalyses the reaction D-glucose + ATP = D-glucose 6-phosphate + ADP + H(+). Functionally, catalyzes the phosphorylation of glucose using polyphosphate or ATP as the phosphoryl donor. Polyphosphate, rather than ATP, seems to be the major phosphate donor for the enzyme in M.tuberculosis. This Mycobacterium tuberculosis (strain CDC 1551 / Oshkosh) protein is Polyphosphate glucokinase (ppgK).